A 91-amino-acid chain; its full sequence is Small ribosomal subunit protein uS19 (91 aa).

Belongs to the universal ribosomal protein uS19 family.

Functionally, protein S19 forms a complex with S13 that binds strongly to the 16S ribosomal RNA. The protein is Small ribosomal subunit protein uS19 of Prochlorococcus marinus (strain MIT 9515).